Here is a 472-residue protein sequence, read N- to C-terminus: UDP-glucuronosyltransferase (472 aa).

Residues N59, N227, and N377 are each glycosylated (N-linked (GlcNAc...) asparagine). A helical transmembrane segment spans residues 436 to 456 (FGFILLILLTVLWVTLKCCLF).

This sequence belongs to the UDP-glycosyltransferase family.

Its subcellular location is the microsome membrane. It localises to the endoplasmic reticulum membrane. It catalyses the reaction glucuronate acceptor + UDP-alpha-D-glucuronate = acceptor beta-D-glucuronoside + UDP + H(+). Its function is as follows. UDPGT is of major importance in the conjugation and subsequent elimination of potentially toxic xenobiotics and endogenous compounds. This is UDP-glucuronosyltransferase (ugt3) from Pleuronectes platessa (European plaice).